The primary structure comprises 512 residues: Protein arginine N-methyltransferase 2 (512 aa).

The interval 67-103 (TSNIDDLPLPPPIQEVEEEEPTQQNIEQQQQTQDESD) is disordered. Residues 88-99 (TQQNIEQQQQTQ) show a composition bias toward low complexity. In terms of domain architecture, SAM-dependent MTase PRMT-type spans 120-508 (DEEYFSSYSK…KTNPFDYSYQ (389 aa)). S-adenosyl-L-methionine is bound by residues H133, R142, G166, and E217. Active-site residues include E231 and E240. Positions 375 to 395 (DDDDNDNNNNNNDNSNDDENK) are disordered.

This sequence belongs to the class I-like SAM-binding methyltransferase superfamily. Protein arginine N-methyltransferase family.

Its subcellular location is the cytoplasm. The protein resides in the nucleus. It carries out the reaction L-arginyl-[protein] + 2 S-adenosyl-L-methionine = N(omega),N(omega)-dimethyl-L-arginyl-[protein] + 2 S-adenosyl-L-homocysteine + 2 H(+). Arginine methyltransferase that methylates the guanidino nitrogens of arginyl residues in some proteins such as histones. The chain is Protein arginine N-methyltransferase 2 (prmt2) from Dictyostelium discoideum (Social amoeba).